A 328-amino-acid polypeptide reads, in one-letter code: Phenylalanine--tRNA ligase alpha subunit (328 aa).

E245 provides a ligand contact to Mg(2+).

This sequence belongs to the class-II aminoacyl-tRNA synthetase family. Phe-tRNA synthetase alpha subunit type 1 subfamily. In terms of assembly, tetramer of two alpha and two beta subunits. The cofactor is Mg(2+).

Its subcellular location is the cytoplasm. It carries out the reaction tRNA(Phe) + L-phenylalanine + ATP = L-phenylalanyl-tRNA(Phe) + AMP + diphosphate + H(+). In Helicobacter pylori (strain G27), this protein is Phenylalanine--tRNA ligase alpha subunit.